The primary structure comprises 745 residues: Elongation factor G, mitochondrial (745 aa).

A tr-type G domain is found at 40–317 (EKIRNIGISA…AVLDYLPNPG (278 aa)). Residues 49–56 (AHIDSGKT), 116–120 (DTPGH), and 170–173 (NKLD) contribute to the GTP site.

This sequence belongs to the TRAFAC class translation factor GTPase superfamily. Classic translation factor GTPase family. EF-G/EF-2 subfamily.

The protein localises to the mitochondrion. It participates in protein biosynthesis; polypeptide chain elongation. Its function is as follows. Mitochondrial GTPase that catalyzes the GTP-dependent ribosomal translocation step during translation elongation. During this step, the ribosome changes from the pre-translocational (PRE) to the post-translocational (POST) state as the newly formed A-site-bound peptidyl-tRNA and P-site-bound deacylated tRNA move to the P and E sites, respectively. Catalyzes the coordinated movement of the two tRNA molecules, the mRNA and conformational changes in the ribosome. Essential during development as it acts as a retrograde signal from mitochondria to the nucleus to slow down cell proliferation if mitochondrial energy output is low. The polypeptide is Elongation factor G, mitochondrial (Drosophila willistoni (Fruit fly)).